Here is a 339-residue protein sequence, read N- to C-terminus: Phenylalanine--tRNA ligase alpha subunit (339 aa).

E262 contributes to the Mg(2+) binding site.

Belongs to the class-II aminoacyl-tRNA synthetase family. Phe-tRNA synthetase alpha subunit type 1 subfamily. In terms of assembly, tetramer of two alpha and two beta subunits. Mg(2+) serves as cofactor.

It localises to the cytoplasm. The enzyme catalyses tRNA(Phe) + L-phenylalanine + ATP = L-phenylalanyl-tRNA(Phe) + AMP + diphosphate + H(+). The polypeptide is Phenylalanine--tRNA ligase alpha subunit (Neisseria gonorrhoeae (strain ATCC 700825 / FA 1090)).